The following is a 189-amino-acid chain: Pyridoxal 5'-phosphate synthase subunit PdxT (189 aa).

47–49 is an L-glutamine binding site; it reads GES. Residue Cys79 is the Nucleophile of the active site. Residues Arg106 and 135-136 contribute to the L-glutamine site; that span reads IR. Active-site charge relay system residues include His171 and Glu173.

Belongs to the glutaminase PdxT/SNO family. In terms of assembly, in the presence of PdxS, forms a dodecamer of heterodimers. Only shows activity in the heterodimer.

It carries out the reaction aldehydo-D-ribose 5-phosphate + D-glyceraldehyde 3-phosphate + L-glutamine = pyridoxal 5'-phosphate + L-glutamate + phosphate + 3 H2O + H(+). It catalyses the reaction L-glutamine + H2O = L-glutamate + NH4(+). The protein operates within cofactor biosynthesis; pyridoxal 5'-phosphate biosynthesis. Catalyzes the hydrolysis of glutamine to glutamate and ammonia as part of the biosynthesis of pyridoxal 5'-phosphate. The resulting ammonia molecule is channeled to the active site of PdxS. The polypeptide is Pyridoxal 5'-phosphate synthase subunit PdxT (Caldanaerobacter subterraneus subsp. tengcongensis (strain DSM 15242 / JCM 11007 / NBRC 100824 / MB4) (Thermoanaerobacter tengcongensis)).